We begin with the raw amino-acid sequence, 156 residues long: Ribosomal RNA large subunit methyltransferase H (156 aa).

Residues leucine 72, glycine 104, and 123 to 128 contribute to the S-adenosyl-L-methionine site; that span reads LGKMVW.

Belongs to the RNA methyltransferase RlmH family. Homodimer.

It is found in the cytoplasm. It carries out the reaction pseudouridine(1915) in 23S rRNA + S-adenosyl-L-methionine = N(3)-methylpseudouridine(1915) in 23S rRNA + S-adenosyl-L-homocysteine + H(+). Its function is as follows. Specifically methylates the pseudouridine at position 1915 (m3Psi1915) in 23S rRNA. This is Ribosomal RNA large subunit methyltransferase H from Roseobacter denitrificans (strain ATCC 33942 / OCh 114) (Erythrobacter sp. (strain OCh 114)).